A 1011-amino-acid polypeptide reads, in one-letter code: Rap guanine nucleotide exchange factor 4 (1011 aa).

The 76-residue stretch at 216–291 (SRAPHMIRDR…DKYLFYRFLD (76 aa)) folds into the DEP domain. Residues 422-425 (GKLA) and 432-433 (RA) each bind 3',5'-cyclic AMP. Residues 496-634 (QKYTVMSGTP…ELEKIVKQIS (139 aa)) enclose the N-terminal Ras-GEF domain. Positions 772–1009 (SSKDLAYQMT…SQMSHRLEPR (238 aa)) constitute a Ras-GEF domain.

As to quaternary structure, interacts with RAP1B, RIMS1 and RIMS2. Probably part of a complex with RIMS2 and GTP-activated RAB3A. Expressed in cerebellum, pituitary, adrenal gland and liver.

Its subcellular location is the cytoplasm. The protein localises to the membrane. Its function is as follows. Guanine nucleotide exchange factor (GEF) for RAP1A, RAP1B and RAP2A small GTPases that is activated by binding cAMP. Seems not to activate RAB3A. Involved in cAMP-dependent, PKA-independent exocytosis through interaction with RIMS2. The polypeptide is Rap guanine nucleotide exchange factor 4 (Rapgef4) (Mus musculus (Mouse)).